Here is a 238-residue protein sequence, read N- to C-terminus: Phosphoribosylaminoimidazole-succinocarboxamide synthase (238 aa).

This sequence belongs to the SAICAR synthetase family.

The enzyme catalyses 5-amino-1-(5-phospho-D-ribosyl)imidazole-4-carboxylate + L-aspartate + ATP = (2S)-2-[5-amino-1-(5-phospho-beta-D-ribosyl)imidazole-4-carboxamido]succinate + ADP + phosphate + 2 H(+). It participates in purine metabolism; IMP biosynthesis via de novo pathway; 5-amino-1-(5-phospho-D-ribosyl)imidazole-4-carboxamide from 5-amino-1-(5-phospho-D-ribosyl)imidazole-4-carboxylate: step 1/2. The polypeptide is Phosphoribosylaminoimidazole-succinocarboxamide synthase (Desulfitobacterium hafniense (strain Y51)).